The sequence spans 122 residues: Diacylglycerol kinase (122 aa).

Positions 10 and 17 each coordinate ATP. Substrate-binding positions include arginine 10, 14–19 (AAGYSW), and 23–26 (RAAW). Glutamate 29 contacts ATP. A divalent metal cation is bound at residue glutamate 29. Substrate-binding positions include 31–35 (AFRQE), 48–51 (WLDV), arginine 56, and glutamate 70. The helical transmembrane segment at 35-55 (EGVAVLLAVVIACWLDVDAIT) threads the bilayer. Residues 57 to 77 (VLLISSVMLVMIVEILNSAIE) form a helical membrane-spanning segment. Residue glutamate 70 is the Proton acceptor of the active site. ATP contacts are provided by residues glutamate 77, 86-88 (EYH), and 95-96 (KD). An a divalent metal cation-binding site is contributed by glutamate 77. A helical membrane pass occupies residues 98 to 118 (GSAAVLIAIIVAVITWCILLW). Residues serine 99 and 113–118 (WCILLW) each bind substrate.

Belongs to the bacterial diacylglycerol kinase family. The cofactor is Mg(2+).

It localises to the cell inner membrane. It carries out the reaction a 1,2-diacyl-sn-glycerol + ATP = a 1,2-diacyl-sn-glycero-3-phosphate + ADP + H(+). Functionally, catalyzes the ATP-dependent phosphorylation of sn-l,2-diacylglycerol (DAG) to phosphatidic acid. Involved in the recycling of diacylglycerol produced as a by-product during membrane-derived oligosaccharide (MDO) biosynthesis. This chain is Diacylglycerol kinase (dgkA), found in Shigella flexneri.